The chain runs to 393 residues: Dihydrolipoyllysine-residue succinyltransferase component of 2-oxoglutarate dehydrogenase complex (393 aa).

The Lipoyl-binding domain occupies 3 to 78 (RINILVPDLP…KSNQILGNIV (76 aa)). Lysine 44 is subject to N6-lipoyllysine. Residues histidine 364 and aspartate 368 contribute to the active site.

This sequence belongs to the 2-oxoacid dehydrogenase family. Forms a 24-polypeptide structural core with octahedral symmetry. Part of the 2-oxoglutarate dehydrogenase (OGDH) complex composed of E1 (2-oxoglutarate dehydrogenase), E2 (dihydrolipoamide succinyltransferase) and E3 (dihydrolipoamide dehydrogenase); the complex contains multiple copies of the three enzymatic components (E1, E2 and E3). It depends on (R)-lipoate as a cofactor.

The catalysed reaction is N(6)-[(R)-dihydrolipoyl]-L-lysyl-[protein] + succinyl-CoA = N(6)-[(R)-S(8)-succinyldihydrolipoyl]-L-lysyl-[protein] + CoA. Its pathway is amino-acid degradation; L-lysine degradation via saccharopine pathway; glutaryl-CoA from L-lysine: step 6/6. Functionally, E2 component of the 2-oxoglutarate dehydrogenase (OGDH) complex which catalyzes the second step in the conversion of 2-oxoglutarate to succinyl-CoA and CO(2). This Buchnera aphidicola subsp. Schizaphis graminum (strain Sg) protein is Dihydrolipoyllysine-residue succinyltransferase component of 2-oxoglutarate dehydrogenase complex (sucB).